Reading from the N-terminus, the 831-residue chain is G-type lectin S-receptor-like serine/threonine-protein kinase At1g61390 (831 aa).

The N-terminal stretch at 1-42 is a signal peptide; the sequence is MYKLPQRNCADKQEYTVHMRKMGMVIFACLLLLIIFPTFGYA. A Bulb-type lectin domain is found at 43–162; it reads DINTSSPLSI…VSGKTLWKSF (120 aa). Over 43–448 the chain is Extracellular; sequence DINTSSPLSI…SSELAGSNRT (406 aa). Residues N45, N71, N106, and N112 are each glycosylated (N-linked (GlcNAc...) asparagine). Residues 298–334 enclose the EGF-like; atypical domain; it reads PTSSCDLYRACGPFGLCVRSRNPKCICLKGFVPKSDD. Intrachain disulfides connect C302-C314 and C308-C322. 4 N-linked (GlcNAc...) asparagine glycosylation sites follow: N340, N356, N399, and N446. Residues 353–439 enclose the PAN domain; sequence CHTNSSTKTQ…GESLSLRLAS (87 aa). 2 disulfide bridges follow: C392–C413 and C396–C402. A helical transmembrane segment spans residues 449–469; the sequence is KIILGTTVSLSIFVILVFAAY. The Cytoplasmic segment spans residues 470-831; that stretch reads KSWRYRTKQN…EITQSVIQGR (362 aa). Residues 520-803 form the Protein kinase domain; sequence FSSSNKLGQG…ELPSPKQPTF (284 aa). Residues 526–534 and K548 each bind ATP; that span reads LGQGGFGPV. S554 and S569 each carry phosphoserine. The caM-binding stretch occupies residues 609-626; it reads TLKFEIDWQKRFNIIQGV. Catalysis depends on D645, which acts as the Proton acceptor. Residues S649 and S662 each carry the phosphoserine modification. T679 is subject to Phosphothreonine. S722 and S814 each carry phosphoserine.

The protein belongs to the protein kinase superfamily. Ser/Thr protein kinase family.

The protein localises to the cell membrane. The enzyme catalyses L-seryl-[protein] + ATP = O-phospho-L-seryl-[protein] + ADP + H(+). It carries out the reaction L-threonyl-[protein] + ATP = O-phospho-L-threonyl-[protein] + ADP + H(+). The sequence is that of G-type lectin S-receptor-like serine/threonine-protein kinase At1g61390 from Arabidopsis thaliana (Mouse-ear cress).